Consider the following 178-residue polypeptide: Nuclear transcription factor Y subunit B-2 (178 aa).

Residues 39-45 mediate DNA binding; sequence LPIANIS. Residues 66–77 form a subunit association domain (SAD) region; it reads LQECVSEFISFV. The disordered stretch occupies residues 131–156; the sequence is SSKAGDGSVKKDTIGPHSGASSSSAQ.

This sequence belongs to the NFYB/HAP3 subunit family. Heterotrimeric transcription factor composed of three components, NF-YA, NF-YB and NF-YC. NF-YB and NF-YC must interact and dimerize for NF-YA association and DNA binding. Interacts with NFYC4 and NFYC6. As to expression, ubiquitous.

The protein localises to the nucleus. Component of the NF-Y/HAP transcription factor complex. The NF-Y complex stimulates the transcription of various genes by recognizing and binding to a CCAAT motif in promoters. May regulate the expression of photosynthetic genes, and may be involved in chloroplast and amyloplast development. The polypeptide is Nuclear transcription factor Y subunit B-2 (NFYB2) (Oryza sativa subsp. japonica (Rice)).